The primary structure comprises 426 residues: Glutamate-1-semialdehyde 2,1-aminomutase (426 aa).

Lys-265 carries the N6-(pyridoxal phosphate)lysine modification.

Belongs to the class-III pyridoxal-phosphate-dependent aminotransferase family. HemL subfamily. As to quaternary structure, homodimer. Pyridoxal 5'-phosphate is required as a cofactor.

It localises to the cytoplasm. The enzyme catalyses (S)-4-amino-5-oxopentanoate = 5-aminolevulinate. Its pathway is porphyrin-containing compound metabolism; protoporphyrin-IX biosynthesis; 5-aminolevulinate from L-glutamyl-tRNA(Glu): step 2/2. In Paraburkholderia phymatum (strain DSM 17167 / CIP 108236 / LMG 21445 / STM815) (Burkholderia phymatum), this protein is Glutamate-1-semialdehyde 2,1-aminomutase.